The following is a 269-amino-acid chain: Undecaprenyl-diphosphatase (269 aa).

7 helical membrane-spanning segments follow: residues 40-59, 87-107, 116-136, 160-180, 188-208, 220-240, and 247-267; these read GITF…ALYF, WYII…EEPI, AIIA…DTLG, ALLP…FLGF, FSFL…VGHL, PLLI…ALLL, and SLYP…LFIF.

Belongs to the UppP family.

It localises to the cell inner membrane. The enzyme catalyses di-trans,octa-cis-undecaprenyl diphosphate + H2O = di-trans,octa-cis-undecaprenyl phosphate + phosphate + H(+). Catalyzes the dephosphorylation of undecaprenyl diphosphate (UPP). Confers resistance to bacitracin. This Geobacter metallireducens (strain ATCC 53774 / DSM 7210 / GS-15) protein is Undecaprenyl-diphosphatase.